The sequence spans 109 residues: uncharacterized protein (109 aa).

The protein to E.coli YtfG C-terminal region.

This is an uncharacterized protein from Haemophilus influenzae (strain ATCC 51907 / DSM 11121 / KW20 / Rd).